Reading from the N-terminus, the 224-residue chain is Cytidylate kinase (224 aa).

11 to 19 is an ATP binding site; the sequence is GPAAAGKST.

This sequence belongs to the cytidylate kinase family. Type 1 subfamily.

It is found in the cytoplasm. The enzyme catalyses CMP + ATP = CDP + ADP. It catalyses the reaction dCMP + ATP = dCDP + ADP. In Geobacillus sp. (strain WCH70), this protein is Cytidylate kinase.